Consider the following 462-residue polypeptide: ESX-1 secretion system protein EccE1 (462 aa).

Transmembrane regions (helical) follow at residues 9-29 (FSTG…IAFL) and 34-54 (WWAG…TFYG).

The protein belongs to the EccE family. In terms of assembly, part of the ESX-1 / type VII secretion system (T7SS), which is composed of cytosolic and membrane components. The ESX-1 membrane complex is composed of EccB1, EccCa1, EccCb1, EccD1 and EccE1.

Its subcellular location is the cell inner membrane. Part of the ESX-1 specialized secretion system, which delivers several virulence factors to host cells during infection, including the key virulence factors EsxA (ESAT-6) and EsxB (CFP-10). The polypeptide is ESX-1 secretion system protein EccE1 (Mycobacterium tuberculosis (strain CDC 1551 / Oshkosh)).